A 292-amino-acid chain; its full sequence is Acetyl-coenzyme A carboxylase carboxyl transferase subunit beta (292 aa).

In terms of domain architecture, CoA carboxyltransferase N-terminal spans 36–292; sequence MWSKCEKCAK…LLRMHEVDYE (257 aa). Positions 40, 43, 59, and 62 each coordinate Zn(2+). The C4-type zinc-finger motif lies at 40–62; it reads CEKCAKILYTEDLRENFNVCPNC.

This sequence belongs to the AccD/PCCB family. As to quaternary structure, acetyl-CoA carboxylase is a heterohexamer composed of biotin carboxyl carrier protein (AccB), biotin carboxylase (AccC) and two subunits each of ACCase subunit alpha (AccA) and ACCase subunit beta (AccD). It depends on Zn(2+) as a cofactor.

It localises to the cytoplasm. The enzyme catalyses N(6)-carboxybiotinyl-L-lysyl-[protein] + acetyl-CoA = N(6)-biotinyl-L-lysyl-[protein] + malonyl-CoA. Its pathway is lipid metabolism; malonyl-CoA biosynthesis; malonyl-CoA from acetyl-CoA: step 1/1. Functionally, component of the acetyl coenzyme A carboxylase (ACC) complex. Biotin carboxylase (BC) catalyzes the carboxylation of biotin on its carrier protein (BCCP) and then the CO(2) group is transferred by the transcarboxylase to acetyl-CoA to form malonyl-CoA. In Clostridium perfringens (strain ATCC 13124 / DSM 756 / JCM 1290 / NCIMB 6125 / NCTC 8237 / Type A), this protein is Acetyl-coenzyme A carboxylase carboxyl transferase subunit beta.